The following is a 65-amino-acid chain: Large ribosomal subunit protein bL35 (65 aa).

Belongs to the bacterial ribosomal protein bL35 family.

In Paraburkholderia xenovorans (strain LB400), this protein is Large ribosomal subunit protein bL35.